Here is a 120-residue protein sequence, read N- to C-terminus: SPbeta prophage-derived uncharacterized protein YosG (120 aa).

This is SPbeta prophage-derived uncharacterized protein YosG (yosG) from Bacillus subtilis (strain 168).